Reading from the N-terminus, the 534-residue chain is Arginine--tRNA ligase (534 aa).

A 'HIGH' region motif is present at residues 120-130; the sequence is ANPTGFLHLGH.

This sequence belongs to the class-I aminoacyl-tRNA synthetase family. In terms of assembly, monomer.

It is found in the cytoplasm. The catalysed reaction is tRNA(Arg) + L-arginine + ATP = L-arginyl-tRNA(Arg) + AMP + diphosphate. In Mesomycoplasma hyopneumoniae (strain J / ATCC 25934 / NCTC 10110) (Mycoplasma hyopneumoniae), this protein is Arginine--tRNA ligase.